Here is a 275-residue protein sequence, read N- to C-terminus: NH(3)-dependent NAD(+) synthetase (275 aa).

46–53 provides a ligand contact to ATP; it reads GISGGQDS. A Mg(2+)-binding site is contributed by Asp52. Residue Arg140 participates in deamido-NAD(+) binding. Residue Thr160 participates in ATP binding. Glu165 lines the Mg(2+) pocket. Lys173 and Asp180 together coordinate deamido-NAD(+). Positions 189 and 211 each coordinate ATP. 260–261 serves as a coordination point for deamido-NAD(+); it reads HK.

This sequence belongs to the NAD synthetase family. Homodimer.

It carries out the reaction deamido-NAD(+) + NH4(+) + ATP = AMP + diphosphate + NAD(+) + H(+). Its pathway is cofactor biosynthesis; NAD(+) biosynthesis; NAD(+) from deamido-NAD(+) (ammonia route): step 1/1. Catalyzes the ATP-dependent amidation of deamido-NAD to form NAD. Uses ammonia as a nitrogen source. This is NH(3)-dependent NAD(+) synthetase from Enterobacter sp. (strain 638).